We begin with the raw amino-acid sequence, 390 residues long: Probable purine permease 18 (390 aa).

Residues 1–14 (MEMTEASKQTTAEG) show a composition bias toward polar residues. The segment at 1-23 (MEMTEASKQTTAEGSANPEPDQI) is disordered. At Ser25 the chain carries Phosphoserine. 10 consecutive transmembrane segments (helical) span residues 39 to 59 (ISVSLCIFLVLLGDSLVMLLL), 81 to 101 (WLQALVQNAAFPLLIPLFFIF), 120 to 140 (LILLYISLGVLVAAHSKLFAL), 148 to 168 (GVFTLISATQLIFTAIFAAII), 176 to 196 (WIILSIIGSILIYVFGSPEFG), 211 to 231 (WLTFAASVAFALSLCLFQLCF), 250 to 270 (VIEMQICVSFVATVVCLVGLF), 297 to 317 (IGLALSWQVWAVGLMGLVLYV), 324 to 344 (VVHMCTSPLVALFVVLAFDFM), and 348 to 368 (FSWPRIGTLIATVVALGSYFY).

This sequence belongs to the purine permeases (TC 2.A.7.14) family.

The protein localises to the membrane. This is Probable purine permease 18 (PUP18) from Arabidopsis thaliana (Mouse-ear cress).